Consider the following 112-residue polypeptide: Large ribosomal subunit protein bL17 (112 aa).

This sequence belongs to the bacterial ribosomal protein bL17 family. As to quaternary structure, part of the 50S ribosomal subunit. Contacts protein L32.

The polypeptide is Large ribosomal subunit protein bL17 (Moorella thermoacetica (strain ATCC 39073 / JCM 9320)).